Reading from the N-terminus, the 33-residue chain is Photosystem II reaction center protein Psb30 (33 aa).

Residues 5–25 traverse the membrane as a helical segment; that stretch reads VIAQLIALALIVGSGPLVIAL.

This sequence belongs to the Psb30/Ycf12 family. In terms of assembly, PSII is composed of 1 copy each of membrane proteins PsbA, PsbB, PsbC, PsbD, PsbE, PsbF, PsbH, PsbI, PsbJ, PsbK, PsbL, PsbM, PsbT, PsbX, PsbY, PsbZ, Psb30/Ycf12, peripheral proteins of the oxygen-evolving complex and a large number of cofactors. It forms dimeric complexes.

The protein resides in the plastid. It is found in the chloroplast thylakoid membrane. A core subunit of photosystem II (PSII), probably helps stabilize the reaction center. In Physcomitrium patens (Spreading-leaved earth moss), this protein is Photosystem II reaction center protein Psb30.